The following is a 129-amino-acid chain: uncharacterized protein (129 aa).

Disordered regions lie at residues 1 to 57 (MGGG…LPNH) and 87 to 129 (PVSS…WLWW). Basic and acidic residues predominate over residues 10-20 (SGEERREKRSG). Residues 87-99 (PVSSSPSRSPSSS) show a composition bias toward low complexity.

This is an uncharacterized protein from Homo sapiens (Human).